A 245-amino-acid chain; its full sequence is Sugar fermentation stimulation protein homolog (245 aa).

It belongs to the SfsA family.

The polypeptide is Sugar fermentation stimulation protein homolog (Rhodospirillum rubrum (strain ATCC 11170 / ATH 1.1.1 / DSM 467 / LMG 4362 / NCIMB 8255 / S1)).